A 687-amino-acid polypeptide reads, in one-letter code: Histone deacetylase clr3 (687 aa).

Residues 55–385 form a histone deacetylase region; it reads KKSGLCYDPR…ALAVAQSLLG (331 aa). His195 is an active-site residue.

This sequence belongs to the histone deacetylase family. HD type 2 subfamily. In terms of assembly, interacts with ccq1, clr1, clr2 and mit1.

The protein localises to the nucleus. Its subcellular location is the chromosome. It is found in the centromere. It localises to the telomere. It carries out the reaction N(6)-acetyl-L-lysyl-[histone] + H2O = L-lysyl-[histone] + acetate. Its function is as follows. Responsible for the deacetylation of lysine residues on the N-terminal part of the core histones (H2A, H2B, H3 and H4). Histone deacetylation gives a tag for epigenetic repression and plays an important role in transcriptional regulation, cell cycle progression and developmental events. Histone deacetylases act via the formation of large multiprotein complexes. Required for proper positioning of nucleosomes at heterochromatic loci and for transcriptional gene silencing (TGS) function of the Snf2/Hdac-containing repressor complex (SHREC). The polypeptide is Histone deacetylase clr3 (clr3) (Schizosaccharomyces pombe (strain 972 / ATCC 24843) (Fission yeast)).